A 228-amino-acid chain; its full sequence is L-ribulose-5-phosphate 4-epimerase UlaF (228 aa).

Residues 26–27 (GN), 43–44 (SG), and 72–73 (SS) each bind substrate. Positions 74, 93, and 95 each coordinate Zn(2+). Asp118 (proton donor/acceptor) is an active-site residue. His167 provides a ligand contact to Zn(2+). Tyr225 functions as the Proton donor/acceptor in the catalytic mechanism.

It belongs to the aldolase class II family. AraD/FucA subfamily. It depends on Zn(2+) as a cofactor.

It carries out the reaction L-ribulose 5-phosphate = D-xylulose 5-phosphate. It participates in cofactor degradation; L-ascorbate degradation; D-xylulose 5-phosphate from L-ascorbate: step 4/4. In terms of biological role, catalyzes the isomerization of L-ribulose 5-phosphate to D-xylulose 5-phosphate. Is involved in the anaerobic L-ascorbate utilization. The polypeptide is L-ribulose-5-phosphate 4-epimerase UlaF (Escherichia coli O6:K15:H31 (strain 536 / UPEC)).